We begin with the raw amino-acid sequence, 4194 residues long: Hybrid PKS-NRPS synthetase pydA (4194 aa).

The 437-residue stretch at arginine 14 to asparagine 450 folds into the Ketosynthase family 3 (KS3) domain. Residues cysteine 187, histidine 326, and histidine 370 each act as for beta-ketoacyl synthase activity in the active site. Residues valine 565–phenylalanine 887 enclose the Malonyl-CoA:ACP transacylase (MAT) domain. The tract at residues histidine 953–alanine 1088 is N-terminal hotdog fold. Residues histidine 953–glutamate 1257 enclose the PKS/mFAS DH domain. The active-site Proton acceptor; for dehydratase activity is histidine 985. Positions leucine 1103–glutamate 1257 are C-terminal hotdog fold. The active-site Proton donor; for dehydratase activity is aspartate 1163. Residues tyrosine 1302–glutamate 1596 are methyltransferase (cMeT) domain. The region spanning threonine 2141 to valine 2314 is the Ketoreductase (KR) domain. The region spanning threonine 2421 to methionine 2505 is the Carrier 1 domain. Position 2465 is an O-(pantetheine 4'-phosphoryl)serine (serine 2465). The segment at asparagine 2512–glutamate 2583 is disordered. Residues alanine 2526–proline 2547 show a composition bias toward low complexity. Residues threonine 2550–serine 2565 are compositionally biased toward polar residues. Basic and acidic residues predominate over residues glutamine 2566–serine 2577. The condensation stretch occupies residues glutamate 2591–threonine 3023. Residues alanine 3056–leucine 3467 are adenylation. The Carrier 2 domain maps to threonine 3580–serine 3660. Serine 3620 is subject to O-(pantetheine 4'-phosphoryl)serine. The 220-residue stretch at isoleucine 3701–alanine 3920 folds into the Thioester reductase (TE) domain. Disordered regions lie at residues arginine 4031–isoleucine 4110 and lysine 4163–aspartate 4194. Residues arginine 4057–aspartate 4072 are compositionally biased toward basic and acidic residues. Residues glutamate 4174 to cysteine 4183 show a composition bias toward acidic residues. Over residues aspartate 4184 to aspartate 4194 the composition is skewed to basic and acidic residues.

The protein in the C-terminal section; belongs to the NRP synthetase family. The cofactor is pantetheine 4'-phosphate.

The protein operates within mycotoxin biosynthesis. In terms of biological role, hybrid PKS-NRPS synthetase; part of the gene cluster that mediates the biosynthesis of pyrrocidines, fungal natural products containing a macrocyclic para-cyclophane connected to a decahydrofluorene ring system that show potent antibiotic activities toward Gram-negative bacteria. Within the pathway, the PKS-NRPS pydA, with the help of the trans-enoyl reductase pydC, synthesize the polyketide-tyrosyl acyl thioester product which can be reductively off-loaded by the terminal reductase (R) domain in pydA. The PKS module of pydA acts in combination with the trans-acting enoyl reductase pydC to produce a methylated polyketide attached to the ACP domain. In parallel, the adenylation (A) domain of the NRPS module activated L-tyrosine, which is then transferred to the ACP domain. The condensation (C) domain subsequently link this group to the polyketide chain, forming an enzyme-bound amide. The alpha/beta hydrolase pydG is then required to catalyze the subsequent Knoevenagel condensation that affords the 3-pyrrolin-2-one ring, whereas the four proteins pydB, pydE, pydX and pydZ then function synergistically to form the cyclophane. PydB and the membrane-bound pydX and pydZ are lipid-binding proteins that can sequester and mold the pdyG product into the inverse S-shape. Binding of the medium chain reductase pydE to the complex would trigger the cascade oxidative cyclization. PydY is involved in the Diels-Alder cycloaddition that forms the decahydrofluorene core. Additional non-enzymatic hydroxylation yields pyrrocidine A2 which can be further reduced into pyrrocidine B by an endogenous reductase. The sequence is that of Hybrid PKS-NRPS synthetase pydA from Acremonium sp.